A 104-amino-acid polypeptide reads, in one-letter code: Large ribosomal subunit protein bL21 (104 aa).

This sequence belongs to the bacterial ribosomal protein bL21 family. In terms of assembly, part of the 50S ribosomal subunit. Contacts protein L20.

This protein binds to 23S rRNA in the presence of protein L20. The sequence is that of Large ribosomal subunit protein bL21 from Azobacteroides pseudotrichonymphae genomovar. CFP2.